Here is a 169-residue protein sequence, read N- to C-terminus: Large ribosomal subunit protein bL17 (169 aa).

The interval 124–169 (EKAVKRQDRSRRVKGSKKAIDEKTSDDSASVEAAPAAPEAEEKKDA) is disordered. Basic residues predominate over residues 131–140 (DRSRRVKGSK). Residues 150–161 (DSASVEAAPAAP) show a composition bias toward low complexity.

The protein belongs to the bacterial ribosomal protein bL17 family. As to quaternary structure, part of the 50S ribosomal subunit. Contacts protein L32.

The chain is Large ribosomal subunit protein bL17 from Chloroherpeton thalassium (strain ATCC 35110 / GB-78).